The chain runs to 222 residues: Capsular polysaccharide type 8 biosynthesis protein cap8A (222 aa).

2 helical membrane passes run 20-40 (ILII…FFVL) and 172-192 (VVNL…YIFF).

Belongs to the CpsC/CapA family.

It is found in the cell membrane. In terms of biological role, required for the biosynthesis of type 8 capsular polysaccharide (Cap8/CP8). Might act as the chain-length regulator. The chain is Capsular polysaccharide type 8 biosynthesis protein cap8A (cap8A) from Staphylococcus aureus.